We begin with the raw amino-acid sequence, 279 residues long: Large ribosomal subunit protein uL2 (279 aa).

A disordered region spans residues 223 to 279; it reads VVMNPVDHPHGGGEGRTSGGRHPVTPWGKPTKGKRTRSNKKTDSLIMRSRHLAKKKR. Positions 270–279 are enriched in basic residues; it reads RSRHLAKKKR.

Belongs to the universal ribosomal protein uL2 family. As to quaternary structure, part of the 50S ribosomal subunit. Forms a bridge to the 30S subunit in the 70S ribosome.

In terms of biological role, one of the primary rRNA binding proteins. Required for association of the 30S and 50S subunits to form the 70S ribosome, for tRNA binding and peptide bond formation. It has been suggested to have peptidyltransferase activity; this is somewhat controversial. Makes several contacts with the 16S rRNA in the 70S ribosome. This Rhodospirillum rubrum (strain ATCC 11170 / ATH 1.1.1 / DSM 467 / LMG 4362 / NCIMB 8255 / S1) protein is Large ribosomal subunit protein uL2.